The following is an 818-amino-acid chain: Dipeptidyl-peptidase 7 (818 aa).

A signal peptide spans 1 to 22 (MKLKRILLSVALLCGIGTTAMA). Residues H87, D223, and S645 each act as charge relay system in the active site.

The protein belongs to the peptidase S46 family.

Its function is as follows. Catalyzes the removal of dipeptides from the N-terminus of oligopeptides. Most efficiently cleaves the synthetic substrate Met-Leu-methylcoumaryl-7-amide (Met-Leu-MCA), and slowly hydrolyzes Leu-Gln-, Lys-Ala-, Leu-Arg, and Ala-Asn-MCA. Is likely involved in amino acid metabolism and bacterial growth/survival of asaccharolytic P.endodontalis, that utilizes amino acids from extracellular proteinaceous nutrients as energy and carbon sources. This is Dipeptidyl-peptidase 7 from Porphyromonas endodontalis (strain ATCC 35406 / DSM 24491 / JCM 8526 / CCUG 16442 / BCRC 14492 / NCTC 13058 / HG 370) (Bacteroides endodontalis).